Here is a 297-residue protein sequence, read N- to C-terminus: CASP-like protein 2U8 (297 aa).

The Cytoplasmic portion of the chain corresponds to 1–10 (MLELYEKRRA). A helical transmembrane segment spans residues 11-31 (LLLLRLAAMFLSLAALLITVL). Residues 32–64 (NREDGFFSINVFGSPQPILAKATADFTLVKGLK) are Extracellular-facing. A helical membrane pass occupies residues 65–85 (FFAGAMGIVAGYSFLQLAIAM). The Cytoplasmic portion of the chain corresponds to 86–101 (ASIFSGAPSILGGKRM). A helical transmembrane segment spans residues 102-122 (AWLCFVGDMTASHLCAAAAAV). The Extracellular portion of the chain corresponds to 123 to 148 (SAQLAYLGKRGAPMWSAVCTYFSHYC). Residues 149 to 169 (LVFGLAVILAFLATLAALLVA) traverse the membrane as a helical segment. The Cytoplasmic portion of the chain corresponds to 170 to 297 (SISSYHLAYD…RVLEMETPCK (128 aa)).

This sequence belongs to the Casparian strip membrane proteins (CASP) family. Homodimer and heterodimers.

The protein localises to the cell membrane. The sequence is that of CASP-like protein 2U8 from Selaginella moellendorffii (Spikemoss).